The primary structure comprises 758 residues: 5-methyltetrahydropteroyltriglutamate--homocysteine methyltransferase (758 aa).

Residues 16 to 19 and Lys-112 each bind 5-methyltetrahydropteroyltri-L-glutamate; that span reads RELK. L-homocysteine is bound by residues 433-435 and Glu-486; that span reads IGS. Residues 433–435 and Glu-486 contribute to the L-methionine site; that span reads IGS. 5-methyltetrahydropteroyltri-L-glutamate-binding positions include 517 to 518 and Trp-563; that span reads RC. L-homocysteine is bound at residue Asp-601. L-methionine is bound at residue Asp-601. Position 607 (Glu-607) interacts with 5-methyltetrahydropteroyltri-L-glutamate. Residues His-643, Cys-645, and Glu-667 each coordinate Zn(2+). The Proton donor role is filled by His-696. Residue Cys-728 participates in Zn(2+) binding.

This sequence belongs to the vitamin-B12 independent methionine synthase family. Zn(2+) serves as cofactor.

It catalyses the reaction 5-methyltetrahydropteroyltri-L-glutamate + L-homocysteine = tetrahydropteroyltri-L-glutamate + L-methionine. It participates in amino-acid biosynthesis; L-methionine biosynthesis via de novo pathway; L-methionine from L-homocysteine (MetE route): step 1/1. Catalyzes the transfer of a methyl group from 5-methyltetrahydrofolate to homocysteine resulting in methionine formation. This Neisseria gonorrhoeae (strain ATCC 700825 / FA 1090) protein is 5-methyltetrahydropteroyltriglutamate--homocysteine methyltransferase.